A 253-amino-acid chain; its full sequence is Histone H1.4 (253 aa).

Low complexity predominate over residues 1–33 (MSDVAVAADTTETPAAPTKASKATKASKATKAS). The interval 1–43 (MSDVAVAADTTETPAAPTKASKATKASKATKASKATKAKTTKV) is disordered. N-acetylserine is present on S2. One can recognise an H15 domain in the interval 51-127 (AHPPFINMVT…GANGRFRLAE (77 aa)). The interval 134 to 253 (KSPAAAKKDA…KKAPAAAPEA (120 aa)) is disordered. Basic and acidic residues-rich tracts occupy residues 139 to 149 (AKKDATGEKKA) and 188 to 200 (AAGD…EVKV). Composition is skewed to basic residues over residues 201–210 (KKVKSPKKIA) and 234–244 (APKKAAAKPAK).

This sequence belongs to the histone H1/H5 family.

Its subcellular location is the nucleus. The protein resides in the chromosome. Functionally, histones H1 are necessary for the condensation of nucleosome chains into higher-order structures. The sequence is that of Histone H1.4 (hil-4) from Caenorhabditis elegans.